Consider the following 227-residue polypeptide: MQLCVALDLEKKEDNLSLLQELKGLDLWAKVGLRSFIRDGAVFLDEIRKIDENFKIFLDLKLYDIPYTMANAALECAKLDIDMLTVHLSSAKSALTALMQRLNALKKRPLIMGVSALTSFSEEEFLMVYNAPLKTQAIKLSAMGKESGIDGVVCSVFESLAIKEALGKDFLTLTPGIRLDQNDKEDQERVANAKEAKQNLSDFIVVGRPIYQAKEPREVVLELLKDC.

Substrate contacts are provided by residues aspartate 8, lysine 30, 59–68 (DLKLYDIPYT), threonine 118, arginine 178, glutamine 187, glycine 207, and arginine 208. Lysine 61 functions as the Proton donor in the catalytic mechanism.

It belongs to the OMP decarboxylase family. Type 1 subfamily. Homodimer.

The catalysed reaction is orotidine 5'-phosphate + H(+) = UMP + CO2. It functions in the pathway pyrimidine metabolism; UMP biosynthesis via de novo pathway; UMP from orotate: step 2/2. Catalyzes the decarboxylation of orotidine 5'-monophosphate (OMP) to uridine 5'-monophosphate (UMP). This is Orotidine 5'-phosphate decarboxylase from Helicobacter pylori (strain ATCC 700392 / 26695) (Campylobacter pylori).